Here is a 312-residue protein sequence, read N- to C-terminus: Protoheme IX farnesyltransferase 1 (312 aa).

9 helical membrane passes run Gly-21–Thr-41, Ile-53–Ala-73, Ser-105–Ala-125, Leu-127–Val-147, Ile-156–Gly-176, Ala-182–Met-202, Val-225–Pro-245, Ala-246–Ala-266, and Leu-292–Ala-312.

It belongs to the UbiA prenyltransferase family. Protoheme IX farnesyltransferase subfamily.

The protein localises to the cell membrane. It catalyses the reaction heme b + (2E,6E)-farnesyl diphosphate + H2O = Fe(II)-heme o + diphosphate. Its pathway is porphyrin-containing compound metabolism; heme O biosynthesis; heme O from protoheme: step 1/1. Converts heme B (protoheme IX) to heme O by substitution of the vinyl group on carbon 2 of heme B porphyrin ring with a hydroxyethyl farnesyl side group. The polypeptide is Protoheme IX farnesyltransferase 1 (Saccharopolyspora erythraea (strain ATCC 11635 / DSM 40517 / JCM 4748 / NBRC 13426 / NCIMB 8594 / NRRL 2338)).